A 65-amino-acid chain; its full sequence is UPF0434 protein bsr0601 (65 aa).

Belongs to the UPF0434 family.

The chain is UPF0434 protein bsr0601 from Bradyrhizobium diazoefficiens (strain JCM 10833 / BCRC 13528 / IAM 13628 / NBRC 14792 / USDA 110).